We begin with the raw amino-acid sequence, 465 residues long: E3 ubiquitin-protein ligase parkin (465 aa).

The Ubiquitin-like domain occupies 1-76; that stretch reads MIVFVRFNSS…VHIVQRPQRK (76 aa). Residue serine 65 is modified to Phosphoserine; by PINK1. The disordered stretch occupies residues 71-96; that stretch reads QRPQRKSHETNASGGDKPQSTPEGSI. Positions 77–237 are necessary for PINK1-dependent localization to mitochondria; it reads SHETNASGGD…LITNNSRSIP (161 aa). The residue at position 80 (threonine 80) is a Phosphothreonine. Polar residues predominate over residues 80-93; sequence TNASGGDKPQSTPE. The segment at 141 to 225 adopts an RING-type 0; atypical zinc-finger fold; sequence PTYHSFFVYC…PTSDKDTSVA (85 aa). Threonine 175 is modified (phosphothreonine; by PINK1). An SYT11 binding 1 region spans residues 204–238; that stretch reads TRAEFFFKCGAHPTSDKDTSVALNLITNNSRSIPC. A Phosphothreonine modification is found at threonine 217. A TRIAD supradomain region spans residues 234–465; it reads RSIPCIACTD…ACMGDHWFDV (232 aa). Residues cysteine 238, cysteine 241, cysteine 253, histidine 257, cysteine 260, cysteine 263, cysteine 289, cysteine 293, cysteine 332, and cysteine 337 each contribute to the Zn(2+) site. The RING-type 1 zinc-finger motif lies at 238-293; it reads CIACTDVRNPVLVFQCNHRHVICLDCFHLYCVTRLNDRQFVHDAQLGYSLPCVAGC. Residues 257–293 are SYT11 binding 2; the sequence is HVICLDCFHLYCVTRLNDRQFVHDAQLGYSLPCVAGC. An IBR-type zinc finger spans residues 313-377; the sequence is NRYQQYGAEE…CKEAYHEGEC (65 aa). Lysine 349 is covalently cross-linked (Glycyl lysine isopeptide (Lys-Gly) (interchain with G-Cter in ISG15)). Cysteine 352, cysteine 360, cysteine 365, and cysteine 368 together coordinate Zn(2+). Lysine 369 is covalently cross-linked (Glycyl lysine isopeptide (Lys-Gly) (interchain with G-Cter in ISG15)). Zn(2+) is bound by residues histidine 373 and cysteine 377. The tract at residues 378 to 410 is REP; it reads DSMFEASGATSQAYRVDQRAAEQARWEEASKET. 2 residues coordinate Zn(2+): cysteine 418 and cysteine 421. An RING-type 2; atypical zinc finger spans residues 418–449; the sequence is CPRCNVPIEKNGGCMHMKCPQPQCKLEWCWNC. Cysteine 431 is a catalytic residue. Cysteine 436, cysteine 441, cysteine 446, cysteine 449, cysteine 457, and histidine 461 together coordinate Zn(2+).

This sequence belongs to the RBR family. Parkin subfamily. Forms an E3 ubiquitin ligase complex with UBE2L3 or UBE2L6. Mediates 'Lys-63'-linked polyubiquitination by associating with UBE2V1. Part of a SCF-like complex, consisting of PRKN, CUL1 and FBXW7. Interacts with SNCAIP. Binds to the C2A and C2B domains of SYT11. Interacts and regulates the turnover of SEPTIN5. Part of a complex, including STUB1, HSP70 and GPR37. The amount of STUB1 in the complex increases during ER stress. STUB1 promotes the dissociation of HSP70 from PRKN and GPR37, thus facilitating PRKN-mediated GPR37 ubiquitination. HSP70 transiently associates with unfolded GPR37 and inhibits the E3 activity of PRKN, whereas, STUB1 enhances the E3 activity of PRKN through promotion of dissociation of HSP70 from PRKN-GPR37 complexes. Interacts with PSMD4 and PACRG. Interacts with LRRK2. Interacts with RANBP2. Interacts with SUMO1 but not SUMO2, which promotes nuclear localization and autoubiquitination. Interacts (via first RING-type domain) with AIMP2 (via N-terminus). Interacts with PSMA7 and RNF41. Interacts with PINK1. Forms a complex with PINK1 and PARK7. Interacts with CHPF, the interaction with isoform 2 may facilitate PRKN transport into the mitochondria. Interacts with MFN2 (phosphorylated), promotes PRKN localization in dysfunctional depolarized mitochondria. Interacts with FBXO7; this promotes translocation to dysfunctional depolarized mitochondria. Interacts with ZNF746. Interacts with heat shock protein 70 family members, including HSPA1L, HSPA1A and HSPA8; interaction HSPA1L promotes translocation to damaged mitochondria. Interacts with BAG4 and, to a lesser extent, BAG5; interaction with BAG4 inhibits translocation to damaged mitochondria. Forms a complex with PRKN and PARK7. Interacts with AMBRA1. Post-translationally, auto-ubiquitinates in an E2-dependent manner leading to its own degradation. Also polyubiquitinated by RNF41 for proteasomal degradation. In terms of processing, S-nitrosylated. Phosphorylated. Activation requires phosphorylation at Ser-65 by PINK1 and binding to PINK1 phosphorylated ubiquitin. Phosphorylation at Thr-175 by PINK1 and at Thr-217 is important for mitochondrial localization. In terms of tissue distribution, largely confined to neuronal elements, including fibers and neuropil. Highly expressed at the forebrain level, in pyramidal cells of layer V, in various cortical regions and cerebellum. Expressed in the nucleus of diagonal band of Broca, nucleus basalis, bed nucleus of the stria terminalis, and olfactory tubercle. Moderate expression is seen in most neurons of the subthalamic nucleus, heart, skeletal muscle and testis. Moderate expression was found in frontal cortex, parietal cortex, cerebellum, heart, skeletal muscle and testis.

It is found in the cytoplasm. Its subcellular location is the cytosol. The protein resides in the nucleus. It localises to the endoplasmic reticulum. The protein localises to the mitochondrion. It is found in the mitochondrion outer membrane. Its subcellular location is the cell projection. The protein resides in the neuron projection. It localises to the postsynaptic density. The protein localises to the presynapse. It catalyses the reaction [E2 ubiquitin-conjugating enzyme]-S-ubiquitinyl-L-cysteine + [acceptor protein]-L-lysine = [E2 ubiquitin-conjugating enzyme]-L-cysteine + [acceptor protein]-N(6)-ubiquitinyl-L-lysine.. Its pathway is protein modification; protein ubiquitination. With respect to regulation, in the autoinhibited state the side chain of Phe-463 inserts into a hydrophobic groove in RING-0, occluding the ubiquitin acceptor site Cys-431, whereas the REP repressor element binds RING-1 and blocks its E2-binding site. Activation of PRKN requires 2 steps: (1) phosphorylation at Ser-65 by PINK1 and (2) binding to phosphorylated ubiquitin, leading to unlock repression of the catalytic Cys-431 by the RING-0 region via an allosteric mechanism and converting PRKN to its fully-active form. According to another report, phosphorylation at Ser-65 by PINK1 is not essential for activation and only binding to phosphorylated ubiquitin is essential to unlock repression. In addition, ISG15 conjugation positively regulates its ubiquitin E3 ligase activity by suppressing the intramolecular interaction that maintains its autoinhibited conformation. Functionally, functions within a multiprotein E3 ubiquitin ligase complex, catalyzing the covalent attachment of ubiquitin moieties onto substrate proteins. Substrates include SYT11 and VDAC1. Other substrates are BCL2, CCNE1, GPR37, RHOT1/MIRO1, MFN1, MFN2, STUB1, SNCAIP, SEPTIN5, TOMM20, USP30, ZNF746, MIRO1 and AIMP2. Mediates monoubiquitination as well as 'Lys-6', 'Lys-11', 'Lys-48'-linked and 'Lys-63'-linked polyubiquitination of substrates depending on the context. Participates in the removal and/or detoxification of abnormally folded or damaged protein by mediating 'Lys-63'-linked polyubiquitination of misfolded proteins such as PARK7: 'Lys-63'-linked polyubiquitinated misfolded proteins are then recognized by HDAC6, leading to their recruitment to aggresomes, followed by degradation. Mediates 'Lys-63'-linked polyubiquitination of a 22 kDa O-linked glycosylated isoform of SNCAIP, possibly playing a role in Lewy-body formation. Mediates monoubiquitination of BCL2, thereby acting as a positive regulator of autophagy. Protects against mitochondrial dysfunction during cellular stress, by acting downstream of PINK1 to coordinate mitochondrial quality control mechanisms that remove and replace dysfunctional mitochondrial components. Depending on the severity of mitochondrial damage and/or dysfunction, activity ranges from preventing apoptosis and stimulating mitochondrial biogenesis to regulating mitochondrial dynamics and eliminating severely damaged mitochondria via mitophagy. Activation and recruitment onto the outer membrane of damaged/dysfunctional mitochondria (OMM) requires PINK1-mediated phosphorylation of both PRKN and ubiquitin. After mitochondrial damage, functions with PINK1 to mediate the decision between mitophagy or preventing apoptosis by inducing either the poly- or monoubiquitination of VDAC1, respectively; polyubiquitination of VDAC1 promotes mitophagy, while monoubiquitination of VDAC1 decreases mitochondrial calcium influx which ultimately inhibits apoptosis. When cellular stress results in irreversible mitochondrial damage, promotes the autophagic degradation of dysfunctional depolarized mitochondria (mitophagy) by promoting the ubiquitination of mitochondrial proteins such as TOMM20, RHOT1/MIRO1, MFN1 and USP30. Preferentially assembles 'Lys-6'-, 'Lys-11'- and 'Lys-63'-linked polyubiquitin chains, leading to mitophagy. The PINK1-PRKN pathway also promotes fission of damaged mitochondria by PINK1-mediated phosphorylation which promotes the PRKN-dependent degradation of mitochondrial proteins involved in fission such as MFN2. This prevents the refusion of unhealthy mitochondria with the mitochondrial network or initiates mitochondrial fragmentation facilitating their later engulfment by autophagosomes. Regulates motility of damaged mitochondria via the ubiquitination and subsequent degradation of MIRO1 and MIRO2; in motor neurons, this likely inhibits mitochondrial intracellular anterograde transport along the axons which probably increases the chance of the mitochondria undergoing mitophagy in the soma. Involved in mitochondrial biogenesis via the 'Lys-48'-linked polyubiquitination of transcriptional repressor ZNF746/PARIS which leads to its subsequent proteasomal degradation and allows activation of the transcription factor PPARGC1A. Limits the production of reactive oxygen species (ROS). Regulates cyclin-E during neuronal apoptosis. In collaboration with CHPF isoform 2, may enhance cell viability and protect cells from oxidative stress. Independently of its ubiquitin ligase activity, protects from apoptosis by the transcriptional repression of p53/TP53. May protect neurons against alpha synuclein toxicity, proteasomal dysfunction, GPR37 accumulation, and kainate-induced excitotoxicity. May play a role in controlling neurotransmitter trafficking at the presynaptic terminal and in calcium-dependent exocytosis. May represent a tumor suppressor gene. The protein is E3 ubiquitin-protein ligase parkin of Rattus norvegicus (Rat).